Reading from the N-terminus, the 513-residue chain is L-arabinose transport ATP-binding protein AraG (513 aa).

2 consecutive ABC transporter domains span residues L6–G243 and V264–A508. ATP is bound at residue G38 to S45.

This sequence belongs to the ABC transporter superfamily.

The protein resides in the cell membrane. The enzyme catalyses L-arabinose(out) + ATP + H2O = L-arabinose(in) + ADP + phosphate + H(+). Part of the binding-protein-dependent transport system for L-arabinose. Probably responsible for energy coupling to the transport system. This chain is L-arabinose transport ATP-binding protein AraG (araG), found in Geobacillus stearothermophilus (Bacillus stearothermophilus).